Consider the following 381-residue polypeptide: Sterol 24-C-methyltransferase ERG6A (381 aa).

The protein belongs to the class I-like SAM-binding methyltransferase superfamily. Erg6/SMT family.

It carries out the reaction lanosterol + S-adenosyl-L-methionine = eburicol + S-adenosyl-L-homocysteine + H(+). It participates in steroid metabolism; ergosterol biosynthesis. Functionally, sterol 24-C-methyltransferase; part of the third module of ergosterol biosynthesis pathway that includes the late steps of the pathway. ERG6A and ERG6B methylate lanosterol at C-24 to produce eburicol. The third module or late pathway involves the ergosterol synthesis itself through consecutive reactions that mainly occur in the endoplasmic reticulum (ER) membrane. Firstly, the squalene synthase ERG9 catalyzes the condensation of 2 farnesyl pyrophosphate moieties to form squalene, which is the precursor of all steroids. Squalene synthase is crucial for balancing the incorporation of farnesyl diphosphate (FPP) into sterol and nonsterol isoprene synthesis. Secondly, squalene is converted into lanosterol by the consecutive action of the squalene epoxidase ERG1 and the lanosterol synthase ERG7. Then, the delta(24)-sterol C-methyltransferase ERG6 methylates lanosterol at C-24 to produce eburicol. Eburicol is the substrate of the sterol 14-alpha demethylase encoded by CYP51A, CYP51B and CYP51C, to yield 4,4,24-trimethyl ergosta-8,14,24(28)-trienol. CYP51B encodes the enzyme primarily responsible for sterol 14-alpha-demethylation, and plays an essential role in ascospore formation. CYP51A encodes an additional sterol 14-alpha-demethylase, induced on ergosterol depletion and responsible for the intrinsic variation in azole sensitivity. The third CYP51 isoform, CYP51C, does not encode a sterol 14-alpha-demethylase, but is required for full virulence on host wheat ears. The C-14 reductase ERG24 then reduces the C14=C15 double bond which leads to 4,4-dimethylfecosterol. A sequence of further demethylations at C-4, involving the C-4 demethylation complex containing the C-4 methylsterol oxidases ERG25, the sterol-4-alpha-carboxylate 3-dehydrogenase ERG26 and the 3-keto-steroid reductase ERG27, leads to the production of fecosterol via 4-methylfecosterol. ERG28 has a role as a scaffold to help anchor ERG25, ERG26 and ERG27 to the endoplasmic reticulum. The C-8 sterol isomerase ERG2 then catalyzes the reaction which results in unsaturation at C-7 in the B ring of sterols and thus converts fecosterol to episterol. The sterol-C5-desaturases ERG3A and ERG3BB then catalyze the introduction of a C-5 double bond in the B ring to produce 5-dehydroepisterol. The C-22 sterol desaturases ERG5A and ERG5B further convert 5-dehydroepisterol into ergosta-5,7,22,24(28)-tetraen-3beta-ol by forming the C-22(23) double bond in the sterol side chain. Finally, ergosta-5,7,22,24(28)-tetraen-3beta-ol is substrate of the C-24(28) sterol reductase ERG4 to produce ergosterol. The chain is Sterol 24-C-methyltransferase ERG6A (FG02783.1) from Gibberella zeae (strain ATCC MYA-4620 / CBS 123657 / FGSC 9075 / NRRL 31084 / PH-1) (Wheat head blight fungus).